The primary structure comprises 804 residues: RasGAP-activating-like protein 1 (804 aa).

2 consecutive C2 domains span residues 1-105 (MAKS…DSWI) and 116-231 (VQGE…KGWF). Residues aspartate 21, aspartate 27, aspartate 74, aspartate 76, aspartate 82, aspartate 149, aspartate 155, aspartate 202, aspartate 204, and aspartate 210 each coordinate Ca(2+). The 229-residue stretch at 317–545 (GLAGRFLDYL…SRVRDFLDRL (229 aa)) folds into the Ras-GAP domain. One can recognise a PH domain in the interval 565–672 (AIVREGYLLK…WLSALRKASA (108 aa)). The segment at 674 to 710 (NPNKLAACHPGAFRSARWTCCLQAERSAAGCSRTHSA) adopts a Btk-type zinc-finger fold. The Zn(2+) site is built by histidine 682, cysteine 693, cysteine 694, and cysteine 704.

It depends on Ca(2+) as a cofactor. Highly expressed in thyroid and adrenal medulla, lower expression in brain, spinal cord and trachea. Expressed in melanocytes.

In terms of biological role, probable inhibitory regulator of the Ras-cyclic AMP pathway. Plays a role in dendrite formation by melanocytes. In Homo sapiens (Human), this protein is RasGAP-activating-like protein 1.